The sequence spans 548 residues: CBS domain-containing protein CBSCBSPB4 (548 aa).

Residues Met-1–Ser-18 are compositionally biased toward polar residues. Positions Met-1–Ser-58 are disordered. Ser-18 is modified (phosphoserine). The span at Asp-37–Glu-56 shows a compositional bias: low complexity. 4 consecutive CBS domains span residues Val-63–Glu-126, Met-133–Val-190, Ile-233–Glu-293, and Met-301–Thr-358. Positions Pro-411 to Thr-498 constitute a PB1 domain. The chain crosses the membrane as a helical span at residues Ala-521–Leu-543.

The protein localises to the membrane. This Arabidopsis thaliana (Mouse-ear cress) protein is CBS domain-containing protein CBSCBSPB4 (CBSCBSPB4).